Reading from the N-terminus, the 1025-residue chain is Error-prone DNA polymerase (1025 aa).

The protein belongs to the DNA polymerase type-C family. DnaE2 subfamily.

The protein resides in the cytoplasm. The enzyme catalyses DNA(n) + a 2'-deoxyribonucleoside 5'-triphosphate = DNA(n+1) + diphosphate. Its function is as follows. DNA polymerase involved in damage-induced mutagenesis and translesion synthesis (TLS). It is not the major replicative DNA polymerase. The polypeptide is Error-prone DNA polymerase (Alkalilimnicola ehrlichii (strain ATCC BAA-1101 / DSM 17681 / MLHE-1)).